Reading from the N-terminus, the 227-residue chain is Adapter protein MecA 1 (227 aa).

The protein belongs to the MecA family. In terms of assembly, homodimer.

In terms of biological role, enables the recognition and targeting of unfolded and aggregated proteins to the ClpC protease or to other proteins involved in proteolysis. Acts negatively in the development of competence by binding ComK and recruiting it to the ClpCP protease. When overexpressed, inhibits sporulation. Also involved in Spx degradation by ClpC. In Bacillus anthracis, this protein is Adapter protein MecA 1 (mecA1).